Reading from the N-terminus, the 251-residue chain is Probable transcriptional regulatory protein Pmob_0807 (251 aa).

The segment at 1-22 (MSGHNKWANIKHRKGAQDAKRS) is disordered.

This sequence belongs to the TACO1 family.

It localises to the cytoplasm. This Petrotoga mobilis (strain DSM 10674 / SJ95) protein is Probable transcriptional regulatory protein Pmob_0807.